The chain runs to 152 residues: SsrA-binding protein (152 aa).

Residues 132–142 show a composition bias toward basic and acidic residues; it reads REAIKKRDVSD. The segment at 132–152 is disordered; it reads REAIKKRDVSDQIRSSLRRSR.

The protein belongs to the SmpB family.

Its subcellular location is the cytoplasm. In terms of biological role, required for rescue of stalled ribosomes mediated by trans-translation. Binds to transfer-messenger RNA (tmRNA), required for stable association of tmRNA with ribosomes. tmRNA and SmpB together mimic tRNA shape, replacing the anticodon stem-loop with SmpB. tmRNA is encoded by the ssrA gene; the 2 termini fold to resemble tRNA(Ala) and it encodes a 'tag peptide', a short internal open reading frame. During trans-translation Ala-aminoacylated tmRNA acts like a tRNA, entering the A-site of stalled ribosomes, displacing the stalled mRNA. The ribosome then switches to translate the ORF on the tmRNA; the nascent peptide is terminated with the 'tag peptide' encoded by the tmRNA and targeted for degradation. The ribosome is freed to recommence translation, which seems to be the essential function of trans-translation. The sequence is that of SsrA-binding protein from Bdellovibrio bacteriovorus (strain ATCC 15356 / DSM 50701 / NCIMB 9529 / HD100).